The primary structure comprises 381 residues: CCN family member 1 (381 aa).

The signal sequence occupies residues 1-24 (MSSRIARALALVVTLLHLTRLALS). One can recognise an IGFBP N-terminal domain in the interval 25–94 (TCPAACHCPL…TALKGICRAQ (70 aa)). Cystine bridges form between Cys-26–Cys-50, Cys-30–Cys-52, Cys-32–Cys-53, Cys-39–Cys-56, Cys-64–Cys-78, and Cys-70–Cys-91. Residues 98–164 (RPCEYNSRIY…GQCCEEWVCD (67 aa)) form the VWFC domain. The residue at position 188 (Ser-188) is a Phosphoserine; by FAM20C. Positions 228 to 273 (KCIVQTTSWSQCSKTCGTGISTRVTNDNPECRLVKETRICEVRPCG) constitute a TSP type-1 domain. The interval 279–315 (SLKKGKKCSKTKKSPEPVRFTYAGCLSVKKYRPKYCG) is heparin-binding. 5 disulfides stabilise this stretch: Cys-286–Cys-323, Cys-303–Cys-337, Cys-314–Cys-353, Cys-317–Cys-355, and Cys-322–Cys-359. Residues 286–360 (CSKTKKSPEP…QSCKCNYNCP (75 aa)) enclose the CTCK domain.

This sequence belongs to the CCN family. As to quaternary structure, interaction with integrins is heparin- and cell-type-dependent and promotes cell adhesion. In skin fibroblasts it binds ITGA6/ITGB1, in endothelial cells, binds ITGAV/ITGB3 and in platelets, ITGA2B/ITGB3. Binds, in vitro, ITGAV/ITGB5.

It is found in the secreted. Promotes cell proliferation, chemotaxis, angiogenesis and cell adhesion. Appears to play a role in wound healing by up-regulating, in skin fibroblasts, the expression of a number of genes involved in angiogenesis, inflammation and matrix remodeling including VEGA-A, VEGA-C, MMP1, MMP3, TIMP1, uPA, PAI-1 and integrins alpha-3 and alpha-5. CCN1-mediated gene regulation is dependent on heparin-binding. Down-regulates the expression of alpha-1 and alpha-2 subunits of collagen type-1. Promotes cell adhesion and adhesive signaling through integrin alpha-6/beta-1, cell migration through integrin alpha-v/beta-5 and cell proliferation through integrin alpha-v/beta-3. This Homo sapiens (Human) protein is CCN family member 1.